The following is a 177-amino-acid chain: Large ribosomal subunit protein uL6 (177 aa).

A compositionally biased stretch (basic and acidic residues) spans 156-171 (PYKGKGVRYDTETIRR). Residues 156-177 (PYKGKGVRYDTETIRRKEGKKK) form a disordered region.

This sequence belongs to the universal ribosomal protein uL6 family. In terms of assembly, part of the 50S ribosomal subunit.

In terms of biological role, this protein binds to the 23S rRNA, and is important in its secondary structure. It is located near the subunit interface in the base of the L7/L12 stalk, and near the tRNA binding site of the peptidyltransferase center. In Gluconacetobacter diazotrophicus (strain ATCC 49037 / DSM 5601 / CCUG 37298 / CIP 103539 / LMG 7603 / PAl5), this protein is Large ribosomal subunit protein uL6.